Here is a 215-residue protein sequence, read N- to C-terminus: ATP phosphoribosyltransferase (215 aa).

The protein belongs to the ATP phosphoribosyltransferase family. Short subfamily. In terms of assembly, heteromultimer composed of HisG and HisZ subunits.

Its subcellular location is the cytoplasm. It catalyses the reaction 1-(5-phospho-beta-D-ribosyl)-ATP + diphosphate = 5-phospho-alpha-D-ribose 1-diphosphate + ATP. It functions in the pathway amino-acid biosynthesis; L-histidine biosynthesis; L-histidine from 5-phospho-alpha-D-ribose 1-diphosphate: step 1/9. Its function is as follows. Catalyzes the condensation of ATP and 5-phosphoribose 1-diphosphate to form N'-(5'-phosphoribosyl)-ATP (PR-ATP). Has a crucial role in the pathway because the rate of histidine biosynthesis seems to be controlled primarily by regulation of HisG enzymatic activity. This is ATP phosphoribosyltransferase from Gloeothece citriformis (strain PCC 7424) (Cyanothece sp. (strain PCC 7424)).